We begin with the raw amino-acid sequence, 142 residues long: Transcription antitermination protein NusB (142 aa).

The protein belongs to the NusB family.

In terms of biological role, involved in transcription antitermination. Required for transcription of ribosomal RNA (rRNA) genes. Binds specifically to the boxA antiterminator sequence of the ribosomal RNA (rrn) operons. The sequence is that of Transcription antitermination protein NusB from Borrelia garinii subsp. bavariensis (strain ATCC BAA-2496 / DSM 23469 / PBi) (Borreliella bavariensis).